We begin with the raw amino-acid sequence, 301 residues long: 2-oxo-3-(phosphooxy)propyl 3-oxoalkanoate synthase (301 aa).

It belongs to the AfsA family.

The enzyme catalyses a medium-chain 3-oxoacyl-[ACP] + dihydroxyacetone phosphate = a (4-alkanoyl-5-oxo-2,5-dihydrofuran-3-yl)methyl phosphate + holo-[ACP] + H2O. Involved in the biosynthesis of A factor (2-isocapryloyl-3R-hydroxymethyl-gamma-butyrolactone), a gamma-butyrolactone autoregulator that triggers secondary metabolism and morphogenesis in Streptomyces. Catalyzes beta-ketoacyl transfer from 8-methyl-3-oxononanoyl-acyl carrier protein (ACP) to the hydroxyl group of dihydroxyacetone phosphate (DHAP), thus producing an 8-methyl-3-oxononanoyl-DHAP ester. This is 2-oxo-3-(phosphooxy)propyl 3-oxoalkanoate synthase from Streptomyces griseus.